A 182-amino-acid chain; its full sequence is Flightin (182 aa).

Acidic residues predominate over residues 1–15 (MADEEDPWGFDDGGE). The tract at residues 1 to 76 (MADEEDPWGF…PPPPEDDGYR (76 aa)) is disordered.

Several forms of flightin are thought to be produced through post-translational modifications, possibly by phosphorylation. In terms of tissue distribution, found only in indirect flight muscles (IFM).

In terms of biological role, possibly involved in the regulation of flight muscles contraction, possibly by modulating actin-myosin interaction. This is Flightin (fln) from Drosophila melanogaster (Fruit fly).